The chain runs to 321 residues: MSDRMAKFKAGMPKDAIEALKQEFKDNYDTNKDGTVSCAELVKLMNWTEEMAQNIIARLDVNSDGHMQFDEFILYMEGSTKERLYSSDEIKQMFDDLDKDGNGRISPDELNKGVREIYTKVVDGMANKLIQEADKDGDGHVNMEEFFDTLVVKLPIGMGPCKDEEYREYYKNEFEKFDKNGDGSLTTAEMSEFMSKSTKYSDKEIEYLISRVDLNDDGRVQFNEFFMHLDGVSKDHIKQQFMAIDKDKNGKISPEEMVFGITKIYRQMVDFEVAKLIKESSFEDDDGYINFNEFVNRFFSNCPYKINSLYWPIYLGCAVSI.

EF-hand domains are found at residues 15-49 (DAIEALKQEFKDNYDTNKDGTVSCAELVKLMNWTE), 47-82 (WTEEMAQNIIARLDVNSDGHMQFDEFILYMEGSTKE), 85-120 (YSSDEIKQMFDDLDKDGNGRISPDELNKGVREIYTK), 121-156 (VVDGMANKLIQEADKDGDGHVNMEEFFDTLVVKLPI), 165-200 (EYREYYKNEFEKFDKNGDGSLTTAEMSEFMSKSTKY), 200-233 (YSDKEIEYLISRVDLNDDGRVQFNEFFMHLDGVS), 232-267 (VSKDHIKQQFMAIDKDKNGKISPEEMVFGITKIYRQ), and 269-304 (VDFEVAKLIKESSFEDDDGYINFNEFVNRFFSNCPY). D29, N31, D33, T35, E40, D60, N62, D64, H66, E71, D98, D100, N102, R104, E109, D134, D136, D138, H140, E145, D178, N180, D182, S184, E189, D213, N215, D217, R219, E224, D245, D247, N249, K251, E256, D284, D286, Y288, and E293 together coordinate Ca(2+).

Aboral ectoderm, a squamous epithelium covering the surface of the late stage embryo and larva.

Functionally, calcium-binding protein involved in larval development and metamorphosis. Likely to function as calcium buffers mediating the transport of calcium from the sea water to the blastocoel where calcium is required for skeleton formation. In Lytechinus pictus (Painted sea urchin), this protein is Calcium-binding protein LPS1-alpha.